Reading from the N-terminus, the 195-residue chain is Holliday junction branch migration complex subunit RuvA (195 aa).

The domain I stretch occupies residues 1–64; sequence MIGRIAGLLL…EDAHLLFGFM (64 aa). The interval 65 to 140 is domain II; that stretch reads TEPERVLFRQ…KISPAITLPE (76 aa). Residues 140–144 form a flexible linker region; sequence ETGTA. Positions 145 to 195 are domain III; it reads MASSTDKDILNALSALGYNDREANWAVGQLSEGVTVSDGIMQSLRLLSKAK.

It belongs to the RuvA family. Homotetramer. Forms an RuvA(8)-RuvB(12)-Holliday junction (HJ) complex. HJ DNA is sandwiched between 2 RuvA tetramers; dsDNA enters through RuvA and exits via RuvB. An RuvB hexamer assembles on each DNA strand where it exits the tetramer. Each RuvB hexamer is contacted by two RuvA subunits (via domain III) on 2 adjacent RuvB subunits; this complex drives branch migration. In the full resolvosome a probable DNA-RuvA(4)-RuvB(12)-RuvC(2) complex forms which resolves the HJ.

It is found in the cytoplasm. Functionally, the RuvA-RuvB-RuvC complex processes Holliday junction (HJ) DNA during genetic recombination and DNA repair, while the RuvA-RuvB complex plays an important role in the rescue of blocked DNA replication forks via replication fork reversal (RFR). RuvA specifically binds to HJ cruciform DNA, conferring on it an open structure. The RuvB hexamer acts as an ATP-dependent pump, pulling dsDNA into and through the RuvAB complex. HJ branch migration allows RuvC to scan DNA until it finds its consensus sequence, where it cleaves and resolves the cruciform DNA. The sequence is that of Holliday junction branch migration complex subunit RuvA from Nitrosomonas europaea (strain ATCC 19718 / CIP 103999 / KCTC 2705 / NBRC 14298).